Consider the following 83-residue polypeptide: MPYSRDITKFITATEPEVGLPLLALQRSKSVIGIILLVISLLLIFIGIIILSVSSHTTAGSVLVVLSLILGGGGFFLIYKDNS.

2 consecutive transmembrane segments (helical) span residues valine 31–leucine 51 and alanine 59–tyrosine 79.

The protein belongs to the asfivirus EP84R family.

The protein localises to the virion membrane. This chain is Transmembrane protein EP84R, found in Ornithodoros (relapsing fever ticks).